A 37-amino-acid chain; its full sequence is Chorion class CB protein PCH12 (37 aa).

Positions Asp-1–Glu-26 are central domain. Positions Thr-27–Ala-37 are right arm.

This sequence belongs to the chorion protein family.

This protein is one of many from the eggshell of the silk moth. This is Chorion class CB protein PCH12 from Antheraea polyphemus (Polyphemus moth).